We begin with the raw amino-acid sequence, 263 residues long: Translation initiation factor 2 subunit alpha (263 aa).

The S1 motif domain occupies 12–83 (GEILIATVKQ…RKGTIDVSLK (72 aa)).

It belongs to the eIF-2-alpha family. Heterotrimer composed of an alpha, a beta and a gamma chain.

Functionally, eIF-2 functions in the early steps of protein synthesis by forming a ternary complex with GTP and initiator tRNA. The chain is Translation initiation factor 2 subunit alpha from Sulfurisphaera tokodaii (strain DSM 16993 / JCM 10545 / NBRC 100140 / 7) (Sulfolobus tokodaii).